Here is a 1020-residue protein sequence, read N- to C-terminus: LLGL scribble cell polarity complex component 2 (1020 aa).

14 WD repeats span residues 36–69 (SALGFSPSLELLAIGTRSGAIKLYGAPGVEFMGL), 76–117 (VTQV…IGRF), 132–169 (VTAVLAHSSGELLLLGTEGGHVFVVEVPGFRELEENNI), 193–227 (TLHENPLNPRQVLIGYSRGLMVLWDLDRQRPVQHF), 233–264 (LESVWWMEDGESILSSHSDGSYCQWTVTGEDP), 282–324 (AISK…KTHE), 332–364 (IIDFFVIREGENHKGEPSALVVLVEEELVVVDL), 386–462 (TCSH…YKLS), 506–581 (QKIH…FALV), 590–651 (TAIA…LRQS), 710–766 (VRTL…KEIQ), 775–827 (GLVV…VSSK), 832–884 (LTAV…VHYP), and 898–921 (VFTKYGQGFYLISPSEFERFSLST). Residues 935-968 (LQMRSKSPSSPVHRDLPDGVPTEHRNFKGDSEGY) form a disordered region. Basic and acidic residues predominate over residues 946–965 (VHRDLPDGVPTEHRNFKGDS).

It belongs to the WD repeat L(2)GL family. Post-translationally, phosphorylated.

Its subcellular location is the cytoplasm. The protein localises to the cytoskeleton. Functionally, essential for hemidesmosome formation and maintenance of the cytoskeleton elements as well as cellular morphology in the basal epidermis during development. Also involved in regulating growth of the basal epidermis. The chain is LLGL scribble cell polarity complex component 2 (llgl2) from Danio rerio (Zebrafish).